Here is a 168-residue protein sequence, read N- to C-terminus: MSSPQDRAQQYIGQLDKELSKYPTLNNLEKTTGVPKAYAVIGLVALYFFLIIFNLGGQLLTNLAGFVLPGYYSLNALFTASKQDDTQWLTYWVVFSLFTVIESLISVVYWFPFYFTFKFVFLLWLSLPTFKGAETIFRSFLAPTLGRYFQNGSTASGLRAKADAVHTD.

Residues methionine 1–proline 35 are Cytoplasmic-facing. The chain crosses the membrane as a helical span at residues lysine 36–leucine 55. Glycine 56 is a topological domain (lumenal). The chain crosses the membrane as a helical span at residues glycine 57–alanine 76. Over leucine 77–threonine 86 the chain is Cytoplasmic. A helical transmembrane segment spans residues glutamine 87–serine 103. The Lumenal segment spans residues leucine 104–isoleucine 105. The chain crosses the membrane as a helical span at residues serine 106–tryptophan 124. The Cytoplasmic portion of the chain corresponds to leucine 125–aspartate 168.

Belongs to the DP1 family. Oligomer.

The protein localises to the endoplasmic reticulum membrane. Its subcellular location is the golgi apparatus membrane. Required to generate and maintain the structure of the tubular endoplasmic reticulum network and the vacuole. Induces high curvature in membranes and causes membrane tubule formation. Involved in membrane/vesicle trafficking. The protein is Protein yop-1 (yop-1) of Neurospora crassa (strain ATCC 24698 / 74-OR23-1A / CBS 708.71 / DSM 1257 / FGSC 987).